The following is a 287-amino-acid chain: UPF0354 protein SSP1020 (287 aa).

This sequence belongs to the UPF0354 family.

In Staphylococcus saprophyticus subsp. saprophyticus (strain ATCC 15305 / DSM 20229 / NCIMB 8711 / NCTC 7292 / S-41), this protein is UPF0354 protein SSP1020.